The following is a 273-amino-acid chain: Dermonecrotic toxin LhSicTox-alphaIA2aviii (273 aa).

H5 is a catalytic residue. Mg(2+)-binding residues include E25 and D27. The active-site Nucleophile is H41. 2 disulfides stabilise this stretch: C45–C51 and C47–C190. D85 is a binding site for Mg(2+).

Belongs to the arthropod phospholipase D family. Class II subfamily. Requires Mg(2+) as cofactor. Expressed by the venom gland.

It localises to the secreted. The enzyme catalyses an N-(acyl)-sphingosylphosphocholine = an N-(acyl)-sphingosyl-1,3-cyclic phosphate + choline. The catalysed reaction is an N-(acyl)-sphingosylphosphoethanolamine = an N-(acyl)-sphingosyl-1,3-cyclic phosphate + ethanolamine. It carries out the reaction a 1-acyl-sn-glycero-3-phosphocholine = a 1-acyl-sn-glycero-2,3-cyclic phosphate + choline. It catalyses the reaction a 1-acyl-sn-glycero-3-phosphoethanolamine = a 1-acyl-sn-glycero-2,3-cyclic phosphate + ethanolamine. Its function is as follows. Dermonecrotic toxins cleave the phosphodiester linkage between the phosphate and headgroup of certain phospholipids (sphingolipid and lysolipid substrates), forming an alcohol (often choline) and a cyclic phosphate. This toxin acts on sphingomyelin (SM). It may also act on ceramide phosphoethanolamine (CPE), lysophosphatidylcholine (LPC) and lysophosphatidylethanolamine (LPE), but not on lysophosphatidylserine (LPS), and lysophosphatidylglycerol (LPG). It acts by transphosphatidylation, releasing exclusively cyclic phosphate products as second products. Induces dermonecrosis, hemolysis, increased vascular permeability, edema, inflammatory response, and platelet aggregation. In Loxosceles hirsuta (Recluse spider), this protein is Dermonecrotic toxin LhSicTox-alphaIA2aviii.